The chain runs to 500 residues: Probable malate:quinone oxidoreductase (500 aa).

Belongs to the MQO family. Requires FAD as cofactor.

It carries out the reaction (S)-malate + a quinone = a quinol + oxaloacetate. Its pathway is carbohydrate metabolism; tricarboxylic acid cycle; oxaloacetate from (S)-malate (quinone route): step 1/1. In Bordetella avium (strain 197N), this protein is Probable malate:quinone oxidoreductase.